Reading from the N-terminus, the 128-residue chain is Nucleoside diphosphate kinase B (128 aa).

At M1 the chain carries N-acetylmethionine. ATP contacts are provided by K9, F39, T70, R81, and N91. H94 acts as the Pros-phosphohistidine intermediate in catalysis.

The protein belongs to the NDK family. The cofactor is Mg(2+).

The protein resides in the cytoplasm. The protein localises to the nucleus. Its subcellular location is the cell projection. It is found in the lamellipodium. It localises to the ruffle. It catalyses the reaction a 2'-deoxyribonucleoside 5'-diphosphate + ATP = a 2'-deoxyribonucleoside 5'-triphosphate + ADP. The enzyme catalyses a ribonucleoside 5'-diphosphate + ATP = a ribonucleoside 5'-triphosphate + ADP. Its function is as follows. Major role in the synthesis of nucleoside triphosphates other than ATP. This Merluccius australis australis (Austral hake) protein is Nucleoside diphosphate kinase B (nme2).